Here is a 797-residue protein sequence, read N- to C-terminus: Protocadherin beta-9 (797 aa).

Positions 1–26 (MKTRGFSFPRQRQVLFLFLFWGVSLA) are cleaved as a signal peptide. Over 27–690 (GSGFGRYSVT…AQADLLTVYL (664 aa)) the chain is Extracellular. 5 consecutive Cadherin domains span residues 35–133 (VTEE…SPVF), 138–242 (MVLK…VPQF), 247–347 (YETQ…PPEL), 352–451 (LSNS…APAF), and 456–561 (YTLF…SPFV). A glycan (N-linked (GlcNAc...) asparagine) is linked at Asn-169. A glycan (N-linked (GlcNAc...) asparagine) is linked at Asn-418. N-linked (GlcNAc...) asparagine glycosylation occurs at Asn-567. The Cadherin 6 domain occupies 568–671 (GSAPCTELVP…LVDGFSQPYL (104 aa)). The helical transmembrane segment at 691 to 711 (VVALASVSSLFLLSVLLFVAV) threads the bilayer. Residues 712 to 797 (RLCRRSRAAS…TLPNSFGFNY (86 aa)) lie on the Cytoplasmic side of the membrane. Residues 777 to 797 (HRGGKEIEENSTLPNSFGFNY) are disordered. Polar residues predominate over residues 786–797 (NSTLPNSFGFNY).

The protein localises to the cell membrane. Its function is as follows. Potential calcium-dependent cell-adhesion protein. May be involved in the establishment and maintenance of specific neuronal connections in the brain. This is Protocadherin beta-9 (PCDHB9) from Homo sapiens (Human).